The following is a 204-amino-acid chain: Thymidylate kinase (204 aa).

Residue 11–18 (GLDKSGKT) coordinates ATP.

It belongs to the thymidylate kinase family.

It catalyses the reaction dTMP + ATP = dTDP + ADP. The protein operates within pyrimidine metabolism; dTTP biosynthesis. This is Thymidylate kinase (TMK) from Rabbitpox virus (strain Utrecht) (RPV).